We begin with the raw amino-acid sequence, 326 residues long: GATA zinc finger domain-containing protein 21 (326 aa).

Disordered stretches follow at residues 1–102 (MFRN…NNNN) and 145–238 (QNQS…TPER). 2 stretches are compositionally biased toward low complexity: residues 17–102 (NTNL…NNNN) and 148–164 (SSSSSSGASGSRSGSSA). The segment covering 165–189 (LNSINNNNYSPTTSSLNRVRNQYNQ) has biased composition (polar residues). Residues 193–218 (DEEDDDYDNGAEDGFDYDGDDNEDGS) are compositionally biased toward acidic residues. Residues 239-266 (CSNCKITHSSYWRRITVNGQKLDFCNAC) form a GATA-type zinc finger. Residues 277–326 (IKESKQRHSIQNIMNQNQEEEEEEREEEEEEEEEEDEEFETLEEEEEDDE) are disordered. Positions 294–326 (QEEEEEEREEEEEEEEEEDEEFETLEEEEEDDE) are enriched in acidic residues.

The protein is GATA zinc finger domain-containing protein 21 (gtaU) of Dictyostelium discoideum (Social amoeba).